Consider the following 564-residue polypeptide: Arginine--tRNA ligase (564 aa).

The 'HIGH' region signature appears at 130-140 (ANPTGSLHIGH).

This sequence belongs to the class-I aminoacyl-tRNA synthetase family. In terms of assembly, monomer.

The protein resides in the cytoplasm. It carries out the reaction tRNA(Arg) + L-arginine + ATP = L-arginyl-tRNA(Arg) + AMP + diphosphate. The chain is Arginine--tRNA ligase from Malacoplasma penetrans (strain HF-2) (Mycoplasma penetrans).